The chain runs to 306 residues: uncharacterized protein (306 aa).

To L.delbrueckii similar ORF in glnA 5'region.

This is an uncharacterized protein from Lactobacillus delbrueckii subsp. bulgaricus.